Reading from the N-terminus, the 711-residue chain is Polyribonucleotide nucleotidyltransferase (711 aa).

Residues Asp-486 and Asp-492 each coordinate Mg(2+). Residues 553-612 enclose the KH domain; the sequence is PRIHTIKINPDKIKDVIGKGGSVIRALTEETGTTIEIEDDGTVKIAATDGEKAKHAIRRI. Residues 622 to 690 enclose the S1 motif domain; sequence GRVYTGKVTR…RQGRIRLSIK (69 aa). Residues 689 to 711 are disordered; it reads IKEATEQSQPAAAPEAPAAEQGE. Positions 694–711 are enriched in low complexity; the sequence is EQSQPAAAPEAPAAEQGE.

It belongs to the polyribonucleotide nucleotidyltransferase family. In terms of assembly, component of the RNA degradosome, which is a multiprotein complex involved in RNA processing and mRNA degradation. The cofactor is Mg(2+).

Its subcellular location is the cytoplasm. It catalyses the reaction RNA(n+1) + phosphate = RNA(n) + a ribonucleoside 5'-diphosphate. Its function is as follows. Involved in mRNA degradation. Catalyzes the phosphorolysis of single-stranded polyribonucleotides processively in the 3'- to 5'-direction. In Shigella boydii serotype 4 (strain Sb227), this protein is Polyribonucleotide nucleotidyltransferase.